The chain runs to 714 residues: RB-associated KRAB zinc finger protein (714 aa).

One can recognise a KRAB domain in the interval 8–79 (VSFKDVAVDF…GGEFPCQHSP (72 aa)). Glycyl lysine isopeptide (Lys-Gly) (interchain with G-Cter in SUMO2) cross-links involve residues K97 and K259. The required for interaction with RB1 stretch occupies residues 171–260 (TYHGEKMCEF…YQRSQMEMKP (90 aa)). 2 C2H2-type zinc fingers span residues 261–283 (FECS…QRAH) and 289–311 (YECN…RRSH). K315 participates in a covalent cross-link: Glycyl lysine isopeptide (Lys-Gly) (interchain with G-Cter in SUMO2). 7 C2H2-type zinc fingers span residues 317–339 (YKCN…LRTH), 345–367 (YECS…QRNH), 373–395 (YPCN…QRTH), 401–423 (YKCN…QRTH), 429–451 (YQCS…YRSH), 457–479 (YECN…RKVH), and 485–505 (HECS…HTAH). K357 is covalently cross-linked (Glycyl lysine isopeptide (Lys-Gly) (interchain with G-Cter in SUMO2)). An interaction with AR region spans residues 417–714 (ITHQRTHTGE…NMNVLDVENL (298 aa)). The segment at 511 to 533 (YECNECGKTFLVNSAFDGHQPLP) adopts a C2H2-type 10; degenerate zinc-finger fold. Glycyl lysine isopeptide (Lys-Gly) (interchain with G-Cter in SUMO2) cross-links involve residues K534 and K537. 6 C2H2-type zinc fingers span residues 539 to 561 (YECN…YRSH), 567 to 589 (YGCS…QRVH), 595 to 617 (YECY…HRIH), 623 to 645 (YECS…YRSH), 651 to 673 (YECN…YRTH), and 679 to 701 (YECN…QRIH).

It belongs to the krueppel C2H2-type zinc-finger protein family. As to quaternary structure, interacts with AR and RB1. May also interact with other nuclear hormone receptors such as NR3C1/GR. As to expression, expressed in bone, brain, heart, kidney, liver, lung, pancreas and placenta.

The protein localises to the nucleus. May repress E2F-dependent transcription. May promote AR-dependent transcription. The protein is RB-associated KRAB zinc finger protein (RBAK) of Homo sapiens (Human).